We begin with the raw amino-acid sequence, 211 residues long: Envelope protein UL45 homolog (211 aa).

Over 1–46 the chain is Intravirion; that stretch reads MMSPTPEDDRDLVVVRGRLRMMDNGAEHDRERRSYTAWPHLCCGCT. The helical; Signal-anchor for type II membrane protein transmembrane segment at 47–67 threads the bilayer; it reads IGIILTMFVIATTLLLASLFA. Residues 68–211 are Virion surface-facing; sequence FSYMSLESGT…SSILSNAIMK (144 aa). Asn96 and Asn133 each carry an N-linked (GlcNAc...) asparagine; by host glycan.

This sequence belongs to the herpesviridae HHV-1 UL45 family.

Its subcellular location is the virion membrane. The sequence is that of Envelope protein UL45 homolog (UL45H) from Gallid herpesvirus 2 (strain Chicken/Md5/ATCC VR-987) (GaHV-2).